Here is a 316-residue protein sequence, read N- to C-terminus: Methionyl-tRNA formyltransferase (316 aa).

A (6S)-5,6,7,8-tetrahydrofolate-binding site is contributed by 113–116 (SLLP).

It belongs to the Fmt family.

The enzyme catalyses L-methionyl-tRNA(fMet) + (6R)-10-formyltetrahydrofolate = N-formyl-L-methionyl-tRNA(fMet) + (6S)-5,6,7,8-tetrahydrofolate + H(+). Attaches a formyl group to the free amino group of methionyl-tRNA(fMet). The formyl group appears to play a dual role in the initiator identity of N-formylmethionyl-tRNA by promoting its recognition by IF2 and preventing the misappropriation of this tRNA by the elongation apparatus. This Sodalis glossinidius (strain morsitans) protein is Methionyl-tRNA formyltransferase.